The following is a 336-amino-acid chain: Heme A synthase (336 aa).

5 helical membrane passes run 5 to 25 (LTRW…VGGI), 92 to 112 (GRAT…KGII), 117 to 137 (ILSY…GWYM), 153 to 173 (LAFH…KLVK), and 191 to 211 (LIFS…GALV). Histidine 255 is a heme binding site. Transmembrane regions (helical) follow at residues 257–277 (LGAY…LKVK), 284–304 (VAFY…ITLL), and 307–327 (VPII…SVVI). Residue histidine 315 coordinates heme.

It belongs to the COX15/CtaA family. Type 2 subfamily. Interacts with CtaB. Requires heme b as cofactor.

Its subcellular location is the cell membrane. The catalysed reaction is Fe(II)-heme o + 2 A + H2O = Fe(II)-heme a + 2 AH2. It functions in the pathway porphyrin-containing compound metabolism; heme A biosynthesis; heme A from heme O: step 1/1. In terms of biological role, catalyzes the conversion of heme O to heme A by two successive hydroxylations of the methyl group at C8. The first hydroxylation forms heme I, the second hydroxylation results in an unstable dihydroxymethyl group, which spontaneously dehydrates, resulting in the formyl group of heme A. This chain is Heme A synthase, found in Rickettsia bellii (strain OSU 85-389).